We begin with the raw amino-acid sequence, 292 residues long: Bifunctional protein FolD (292 aa).

Residues glycine 169–serine 171 and serine 194 each bind NADP(+).

Belongs to the tetrahydrofolate dehydrogenase/cyclohydrolase family. In terms of assembly, homodimer.

It carries out the reaction (6R)-5,10-methylene-5,6,7,8-tetrahydrofolate + NADP(+) = (6R)-5,10-methenyltetrahydrofolate + NADPH. The catalysed reaction is (6R)-5,10-methenyltetrahydrofolate + H2O = (6R)-10-formyltetrahydrofolate + H(+). It functions in the pathway one-carbon metabolism; tetrahydrofolate interconversion. In terms of biological role, catalyzes the oxidation of 5,10-methylenetetrahydrofolate to 5,10-methenyltetrahydrofolate and then the hydrolysis of 5,10-methenyltetrahydrofolate to 10-formyltetrahydrofolate. This chain is Bifunctional protein FolD, found in Nostoc punctiforme (strain ATCC 29133 / PCC 73102).